The chain runs to 312 residues: Cytochrome c biogenesis protein CcsA (312 aa).

Helical transmembrane passes span 9–29 (ILTH…LITF), 44–64 (GIIV…ISSG), 71–91 (LYES…IPYF), 111–131 (GFAT…VPAL), 143–163 (MILG…LLVI), 216–236 (VISL…VWAN), 251–271 (WAFI…NINL), and 277–297 (AIIA…VNLL).

It belongs to the CcmF/CycK/Ccl1/NrfE/CcsA family. In terms of assembly, may interact with Ccs1.

It localises to the plastid. It is found in the chloroplast thylakoid membrane. In terms of biological role, required during biogenesis of c-type cytochromes (cytochrome c6 and cytochrome f) at the step of heme attachment. This is Cytochrome c biogenesis protein CcsA from Atropa belladonna (Belladonna).